We begin with the raw amino-acid sequence, 151 residues long: Ribosome maturation factor RimP (151 aa).

The protein belongs to the RimP family.

The protein localises to the cytoplasm. In terms of biological role, required for maturation of 30S ribosomal subunits. This Vibrio vulnificus (strain CMCP6) protein is Ribosome maturation factor RimP.